A 365-amino-acid chain; its full sequence is UDP-N-acetylglucosamine--N-acetylmuramyl-(pentapeptide) pyrophosphoryl-undecaprenol N-acetylglucosamine transferase (365 aa).

Residues Thr-10–Gly-12, Asn-124, Arg-165, Ser-193, Ile-248, and Gln-293 each bind UDP-N-acetyl-alpha-D-glucosamine.

The protein belongs to the glycosyltransferase 28 family. MurG subfamily.

Its subcellular location is the cell inner membrane. It catalyses the reaction di-trans,octa-cis-undecaprenyl diphospho-N-acetyl-alpha-D-muramoyl-L-alanyl-D-glutamyl-meso-2,6-diaminopimeloyl-D-alanyl-D-alanine + UDP-N-acetyl-alpha-D-glucosamine = di-trans,octa-cis-undecaprenyl diphospho-[N-acetyl-alpha-D-glucosaminyl-(1-&gt;4)]-N-acetyl-alpha-D-muramoyl-L-alanyl-D-glutamyl-meso-2,6-diaminopimeloyl-D-alanyl-D-alanine + UDP + H(+). Its pathway is cell wall biogenesis; peptidoglycan biosynthesis. Cell wall formation. Catalyzes the transfer of a GlcNAc subunit on undecaprenyl-pyrophosphoryl-MurNAc-pentapeptide (lipid intermediate I) to form undecaprenyl-pyrophosphoryl-MurNAc-(pentapeptide)GlcNAc (lipid intermediate II). The sequence is that of UDP-N-acetylglucosamine--N-acetylmuramyl-(pentapeptide) pyrophosphoryl-undecaprenol N-acetylglucosamine transferase from Geotalea uraniireducens (strain Rf4) (Geobacter uraniireducens).